The following is a 65-amino-acid chain: Large ribosomal subunit protein bL35 (65 aa).

The disordered stretch occupies residues 1–26 (MPKIKTLRGAAKRFKKTASGGFKRKQ). Positions 10–26 (AAKRFKKTASGGFKRKQ) are enriched in basic residues.

The protein belongs to the bacterial ribosomal protein bL35 family.

The protein is Large ribosomal subunit protein bL35 of Histophilus somni (strain 2336) (Haemophilus somnus).